The sequence spans 448 residues: Nicotinate phosphoribosyltransferase pncB1 (448 aa).

The segment at 1-21 is disordered; it reads MGPPPAARRREGEPDNQDPAG. The residue at position 212 (His212) is a Phosphohistidine. The disordered stretch occupies residues 353 to 372; sequence RSSYKESPGGRKEALRRSRA.

The protein belongs to the NAPRTase family. Post-translationally, transiently phosphorylated on a His residue during the reaction cycle. Phosphorylation strongly increases the affinity for substrates and increases the rate of nicotinate D-ribonucleotide production. Dephosphorylation regenerates the low-affinity form of the enzyme, leading to product release.

It carries out the reaction nicotinate + 5-phospho-alpha-D-ribose 1-diphosphate + ATP + H2O = nicotinate beta-D-ribonucleotide + ADP + phosphate + diphosphate. Its pathway is cofactor biosynthesis; NAD(+) biosynthesis; nicotinate D-ribonucleotide from nicotinate: step 1/1. Functionally, involved in the Preiss-Handler pathway, which is a recycling route that permits the salvage of free nicotinamide (NM) and nicotinic acid (Na) involved in the NAD biosynthesis. Catalyzes the synthesis of beta-nicotinate D-ribonucleotide from nicotinate and 5-phospho-D-ribose 1-phosphate at the expense of ATP. It is not able to use nicotinamide. PncB1 contributes to basal NAD level. The polypeptide is Nicotinate phosphoribosyltransferase pncB1 (pncB1) (Mycobacterium tuberculosis (strain CDC 1551 / Oshkosh)).